Reading from the N-terminus, the 281-residue chain is Aliphatic sulfonates import ATP-binding protein SsuB (281 aa).

Positions 40–263 (LDIRGLRKSF…QRGSAELAAL (224 aa)) constitute an ABC transporter domain. An ATP-binding site is contributed by 72–79 (GRSGCGKS).

Belongs to the ABC transporter superfamily. Aliphatic sulfonates importer (TC 3.A.1.17.2) family. The complex is composed of two ATP-binding proteins (SsuB), two transmembrane proteins (SsuC) and a solute-binding protein (SsuA).

The protein resides in the cell inner membrane. The catalysed reaction is ATP + H2O + aliphatic sulfonate-[sulfonate-binding protein]Side 1 = ADP + phosphate + aliphatic sulfonateSide 2 + [sulfonate-binding protein]Side 1.. Part of the ABC transporter complex SsuABC involved in aliphatic sulfonates import. Responsible for energy coupling to the transport system. This is Aliphatic sulfonates import ATP-binding protein SsuB from Rhodopseudomonas palustris (strain ATCC BAA-98 / CGA009).